Consider the following 213-residue polypeptide: Imidazole glycerol phosphate synthase subunit HisH (213 aa).

The Glutamine amidotransferase type-1 domain occupies 4–213 (SIAIVDYGMG…LYRNFVHWKP (210 aa)). The active-site Nucleophile is the Cys83. Residues His193 and Glu195 contribute to the active site.

In terms of assembly, heterodimer of HisH and HisF.

The protein localises to the cytoplasm. It catalyses the reaction 5-[(5-phospho-1-deoxy-D-ribulos-1-ylimino)methylamino]-1-(5-phospho-beta-D-ribosyl)imidazole-4-carboxamide + L-glutamine = D-erythro-1-(imidazol-4-yl)glycerol 3-phosphate + 5-amino-1-(5-phospho-beta-D-ribosyl)imidazole-4-carboxamide + L-glutamate + H(+). The enzyme catalyses L-glutamine + H2O = L-glutamate + NH4(+). The protein operates within amino-acid biosynthesis; L-histidine biosynthesis; L-histidine from 5-phospho-alpha-D-ribose 1-diphosphate: step 5/9. Its function is as follows. IGPS catalyzes the conversion of PRFAR and glutamine to IGP, AICAR and glutamate. The HisH subunit catalyzes the hydrolysis of glutamine to glutamate and ammonia as part of the synthesis of IGP and AICAR. The resulting ammonia molecule is channeled to the active site of HisF. The protein is Imidazole glycerol phosphate synthase subunit HisH of Burkholderia multivorans (strain ATCC 17616 / 249).